Here is a 1390-residue protein sequence, read N- to C-terminus: DNA-directed RNA polymerase subunit beta'' (1390 aa).

Positions 224, 295, 302, and 305 each coordinate Zn(2+).

It belongs to the RNA polymerase beta' chain family. RpoC2 subfamily. In terms of assembly, in plastids the minimal PEP RNA polymerase catalytic core is composed of four subunits: alpha, beta, beta', and beta''. When a (nuclear-encoded) sigma factor is associated with the core the holoenzyme is formed, which can initiate transcription. Zn(2+) serves as cofactor.

The protein localises to the plastid. The protein resides in the chloroplast. The catalysed reaction is RNA(n) + a ribonucleoside 5'-triphosphate = RNA(n+1) + diphosphate. DNA-dependent RNA polymerase catalyzes the transcription of DNA into RNA using the four ribonucleoside triphosphates as substrates. The polypeptide is DNA-directed RNA polymerase subunit beta'' (Daucus carota (Wild carrot)).